Reading from the N-terminus, the 350-residue chain is 3-isopropylmalate dehydrogenase (350 aa).

76 to 87 (GPKWDNAPKRPE) is a binding site for NAD(+). Substrate-binding residues include Arg-94, Arg-104, Arg-132, and Asp-217. Mg(2+) is bound by residues Asp-217, Asp-241, and Asp-245. Residue 275 to 287 (GSAPDIANQNIAN) coordinates NAD(+).

This sequence belongs to the isocitrate and isopropylmalate dehydrogenases family. LeuB type 1 subfamily. In terms of assembly, homodimer. Mg(2+) is required as a cofactor. Mn(2+) serves as cofactor.

It localises to the cytoplasm. It carries out the reaction (2R,3S)-3-isopropylmalate + NAD(+) = 4-methyl-2-oxopentanoate + CO2 + NADH. Its pathway is amino-acid biosynthesis; L-leucine biosynthesis; L-leucine from 3-methyl-2-oxobutanoate: step 3/4. In terms of biological role, catalyzes the oxidation of 3-carboxy-2-hydroxy-4-methylpentanoate (3-isopropylmalate) to 3-carboxy-4-methyl-2-oxopentanoate. The product decarboxylates to 4-methyl-2 oxopentanoate. The chain is 3-isopropylmalate dehydrogenase from Listeria monocytogenes serovar 1/2a (strain ATCC BAA-679 / EGD-e).